We begin with the raw amino-acid sequence, 74 residues long: MQIKHLITLFFLVLIVADQCSAFFSLIPSLIGGLVSAIKGGRRKREIAAQIEQYRDLQKREAELEELLDRLPMF.

Residues 1-22 (MQIKHLITLFFLVLIVADQCSA) form the signal peptide. Lys39 is subject to Lysine amide. Residues 40 to 74 (GGRRKREIAAQIEQYRDLQKREAELEELLDRLPMF) constitute a propeptide that is removed on maturation.

Belongs to the non-disulfide-bridged peptide (NDBP) superfamily. Short antimicrobial peptide (group 4) family. In terms of tissue distribution, expressed by the venom gland.

The protein resides in the secreted. Functionally, shows anti-inflammatory activities, since it decreases release of pro-inflammatory cytokines, and increases release of anti-inflammatory cytokines. Acts by blocking the Toll-like receptor 4 (TLR4). Also increases MHC-II expression in LPS-stimulated cells. Does not show antibacterial activity on Mycobacterium abscessus subsp. massiliense. Does not show antifungal activity. Has low hemolytic activity on human erythrocyte and low monocyte cytotoxicity. In vivo, does not induce immune cell migration. Helical wheel projections predict an amphipathic peptide with distinct hydrophobic and hydrophilic faces. The polypeptide is Peptide ToAP4 (Tityus obscurus (Amazonian scorpion)).